The primary structure comprises 340 residues: MKSTFAALLIMVGCLVSGALLTGSEAAAAQPVTLNYANFPPASTFPCIQMEQWAHEVRTRTRGKVDVLTYPGGTLLGARNMLRGVMSGQADIGCISLAYHPGVFPVMSVFELPLGFTSAEAASSVLWELYSGLRPAELERVKVLTMFTSAPSHFMTVTPVRSLRDLQGMEIRGAGTLSAILEKLGATPVSMPMPEVPEAVQKGIIKGLFTSLDVMKDMNFAEMTGHVTRADQAVYPFAVIMNREAWERLSPDVQQVLDGLAAEHAAWTGRYLDAHVQDSMRWAEEKHGVQVHTLPEEDIAAMRRSVQPLFDAWAQRAADKGADPDAVMRTVDALKAQYGG.

A signal peptide spans 1-29 (MKSTFAALLIMVGCLVSGALLTGSEAAAA). (indol-3-yl)acetate-binding positions include Tyr99, Arg172, 210–213 (TSLD), and Tyr235.

The protein belongs to the bacterial solute-binding protein 7 family. As to quaternary structure, the complex is comprised of an extracytoplasmic solute-binding protein and a heteromeric permease formed by two transmembrane proteins.

Its subcellular location is the periplasm. Solute-binding protein that binds indole-3-pyruvate and indole-3-acetate (in vitro). Can also bind D-tryptophan (in vitro), but that is probably not a physiological ligand. Probably part of a tripartite ATP-independent periplasmic (TRAP) transport system that mediates solute transport into the cytoplasm. This chain is Solute-binding protein Dde_0634, found in Oleidesulfovibrio alaskensis (strain ATCC BAA-1058 / DSM 17464 / G20) (Desulfovibrio alaskensis).